The following is a 374-amino-acid chain: DNA integrity scanning protein DisA (374 aa).

The region spanning 20 to 158 is the DAC domain; it reads DGLMRASLSA…DGMRRVLEDS (139 aa). ATP is bound by residues G87, L105, and 118–122; that span reads TRHRT.

Belongs to the DisA family. Homooctamer. Mg(2+) serves as cofactor.

The catalysed reaction is 2 ATP = 3',3'-c-di-AMP + 2 diphosphate. Its function is as follows. Participates in a DNA-damage check-point that is active prior to asymmetric division when DNA is damaged. DisA forms globular foci that rapidly scan along the chromosomes during sporulation, searching for lesions. When a lesion is present, DisA pauses at the lesion site. This triggers a cellular response that culminates in a temporary block in sporulation initiation. Also has diadenylate cyclase activity, catalyzing the condensation of 2 ATP molecules into cyclic di-AMP (c-di-AMP). c-di-AMP acts as a signaling molecule that couples DNA integrity with progression of sporulation. The rise in c-di-AMP level generated by DisA while scanning the chromosome, operates as a positive signal that advances sporulation; upon encountering a lesion, the DisA focus arrests at the damaged site and halts c-di-AMP synthesis. This chain is DNA integrity scanning protein DisA, found in Streptomyces avermitilis (strain ATCC 31267 / DSM 46492 / JCM 5070 / NBRC 14893 / NCIMB 12804 / NRRL 8165 / MA-4680).